The primary structure comprises 607 residues: Potassium transporter KimA (607 aa).

At 1 to 30 the chain is on the cytoplasmic side; that stretch reads MYHSIKRFLIGKPLKSQAAGEQKLTKLKAL. Residues 31-49 form a helical membrane-spanning segment; the sequence is AMLSSDALSSVAYGTEQIL. Residues Asp-36 and Tyr-43 each contribute to the K(+) site. Over 50–62 the chain is Extracellular; sequence IILATISAAAFWY. A helical transmembrane segment spans residues 63 to 84; the sequence is SIPIAVGVLILLLALILSYRQI. At 85–105 the chain is on the cytoplasmic side; that stretch reads IYAYPQGGGAYIVSKENLGEK. Residues 106–134 form a helical membrane-spanning segment; sequence PGLIAGGSLLVDYILTVAVSISAGTDAIT. K(+) contacts are provided by Asp-117 and Ser-125. Over 135-142 the chain is Extracellular; it reads SAFPALHD. The helical transmembrane segment at 143–162 threads the bilayer; the sequence is YHVPIAIFLVLVIMILNLRG. The Cytoplasmic portion of the chain corresponds to 163–166; sequence LSES. A helical membrane pass occupies residues 167–190; sequence ASILAYPVYLFVVALLVLIAVGLF. At 191-214 the chain is on the extracellular side; the sequence is KLMTGQIDQPAHHTSLGTPVAGIT. The chain crosses the membrane as a helical span at residues 215 to 238; the sequence is LFLLLKAFSSGCSALTGVEAISNA. Residues 239 to 249 are Cytoplasmic-facing; sequence IPAFKNPPARN. A helical membrane pass occupies residues 250 to 271; sequence AARTLAMMGILLAILFSGITVL. Residues 272 to 298 are Extracellular-facing; sequence AYGYGTAPKPDETVVSQIASETFGRNV. A helical membrane pass occupies residues 299-323; sequence FYYVIQGVTSLILVLAANTGFSAFP. At 324–347 the chain is on the cytoplasmic side; sequence QLAFNLARDQYMPRMFTVRGDRLG. The helical transmembrane segment at 348 to 366 threads the bilayer; sequence FSNGIIFLGFASIVLIILF. Topologically, residues 367-372 are extracellular; it reads GGQTEH. A helical membrane pass occupies residues 373–393; the sequence is LIPLYAVGVFIPFTLSQTGMC. The Cytoplasmic portion of the chain corresponds to 394–405; it reads MKWIKQKPKGWI. The helical transmembrane segment at 406–428 threads the bilayer; that stretch reads GKMLINSCGALISFMVLSILFVT. Topologically, residues 429–431 are extracellular; it reads KFN. Residues 432–447 traverse the membrane as a helical segment; it reads VVWPVLIFMPIVVLLF. Residues 448–607 lie on the Cytoplasmic side of the membrane; the sequence is FAIKNHYTAV…VATLPYHFKK (160 aa).

This sequence belongs to the amino acid-polyamine-organocation (APC) superfamily. In terms of assembly, homodimer.

It is found in the cell membrane. It carries out the reaction K(+)(in) + H(+)(in) = K(+)(out) + H(+)(out). Potassium uptake increases at lower external pH and is abolished by the proton ionophore carbonyl cyanide m-chlorophenylhydrazone (CCCP). Binds cyclic di-AMP (c-di-AMP), which inhibits the potassium transport activity. In terms of biological role, high-affinity potassium transporter. Functions as a K(+)/H(+) symporter. The chain is Potassium transporter KimA from Bacillus subtilis (strain 168).